The sequence spans 610 residues: NTPase KAP family P-loop domain-containing protein 1 (610 aa).

Residues 1-414 (MQQEAAQRES…NTVPITVRLL (414 aa)) enclose the KAP NTPase domain. 3 helical membrane passes run 22 to 42 (AVSG…QPII), 118 to 138 (VCLG…LLYL), and 157 to 177 (VFGG…VYSV). Residues 540–587 (ALKPPSPPKSPTRDTPHAAHRANSASRAPPSGRASGQAGEGHHTGDLA) are disordered. Over residues 560-575 (RANSASRAPPSGRASG) the composition is skewed to low complexity.

Its subcellular location is the membrane. The sequence is that of NTPase KAP family P-loop domain-containing protein 1 (NKPD1) from Homo sapiens (Human).